Consider the following 311-residue polypeptide: Putative S-adenosyl-L-methionine-dependent methyltransferase MRA_0152 (311 aa).

S-adenosyl-L-methionine is bound by residues Asp-135 and 164 to 165 (DL).

This sequence belongs to the UPF0677 family.

Exhibits S-adenosyl-L-methionine-dependent methyltransferase activity. The sequence is that of Putative S-adenosyl-L-methionine-dependent methyltransferase MRA_0152 from Mycobacterium tuberculosis (strain ATCC 25177 / H37Ra).